Here is a 250-residue protein sequence, read N- to C-terminus: Alpha/beta hydrolase nvfD (250 aa).

Residues D198 and H226 each act as charge relay system in the active site.

This sequence belongs to the AB hydrolase superfamily.

It functions in the pathway secondary metabolite biosynthesis; terpenoid biosynthesis. Functionally, alpha/beta hydrolase; part of the gene cluster that mediates the biosynthesis of novofumigatonin, a heavily oxygenated meroterpenoid containing a unique orthoester moiety. The first step of the pathway is the synthesis of 3,5-dimethylorsellinic acid (DMOA) by the polyketide synthase nvfA via condensation of one acetyl-CoA starter unit with 3 malonyl-CoA units and 2 methylations. DMOA is then converted to farnesyl-DMOA by the farnesyltransferase nvfB. Epoxydation by FAD-dependent monooxygenase nvfK, followed by a protonation-initiated cyclization catalyzed by the terpene cyclase nvfL leads to the production of asnavolin H. The short chain dehydrogenase nvfC then as a 3-OH dehydrogenase of asnovolin H to yield chemesin D. There are two branches to synthesize asnovolin A from chemesin D. In one branch, chemesin D undergoes Baeyer-Villiger oxidation by nvfH, methylation by nvfJ, and enoyl reduction by the nvfM D enoylreductase that reduces the double bond between C-5'and C-6', to form respectively asnovolin I, asnovolin K, and asnovolin A. In the other branch, the methylation precedes the Baeyer-Villiger oxidation and the enoyl reduction to yield asnovolin A via the asnovolin J intermediate. Asnovolin A is further converted to fumigatonoid A by the Fe(II)/2-oxoglutarate-dependent dioxygenase nvfI that catalyzes an endoperoxidation reaction. The alpha/beta hydrolase nvfD then acts as an epimerase that converts fumigatonoid A to its C-5' epimer, which then undergoes spontaneous or nvfD-catalyzed lactonization. The following step utilizes the ketoreductase nvfG to produce fumigatonoid B. The dioxygenase nvfE further converts fumigatonoid B into fumigatonoid C. Finally the Fe(II)/2-oxoglutarate-dependent dioxygenase nvfF catalyzes two rounds of oxidation to transform fumigatonoid C into the end product, novofumigatonin A. The chain is Alpha/beta hydrolase nvfD from Aspergillus novofumigatus (strain IBT 16806).